Reading from the N-terminus, the 1071-residue chain is MADLSSVDEFLNQCKQSGDAAYGALRSVLERLEDPNTRSKARIFLSDIYKRVGSSETSLQTYHFHIQDIYLDQYEGFQSRKKLTMMVIPSIFIPEDWSFTFYEGLNRHPDTIFKDKTVSELGCGNGWISIAIAAKWLPSKVYGLDINPRAVKISWINLYLNALDDNGEPVYDEEKKTLLDRVEFYESDLLGYCRDNKIQLERIVGCIPQILNPNPEAMSKLITENASEEFLHSLSNYCALQGFVEDQFGLGLIARAVEEGISVIKPAGIMIFNMGGRPGQGVCRRLFERRGVRVTQMWQTKILQAADTDISALVEIERSSPHRFEFFMGLSGDQPICARTAWAYGKAGGRISHALSVYSCQIRQPNLVKIIFDFLKNGFQEISNSLDLSFEDETVADEKIPFLAYLASVLKNSSYFPFEPPAGSKRFCSLIAGFMRTYHRIPINQDNIVVFPSRAVAIESAFRLFSPRLAIVDEHLTRQLPRSWLTSLAIEDTSMDKSDDQITVIESPHQSDLMIELIKKLKPQVVVTGMAPFEVITSSSFLHLLEVTKEIGCRLFLDISDHFELSSLPASNGVLKYLAENQLPSHAAIICGLVKNKVYSDLEVAFVITEVDAIAKALSKTVEVLEGHTAIISQYYYGCLFHELLAFQLADRHAPAERESEKAKSEEIIGFSSSAVSILKDAELSVTEIDETSLIHMDVDQSFLQIPQSVKAAIFESFVRQNISEAEVDINPSIKQFVWSNYGFPTKSSTGFVYADGSLALFNKLVICCAQEGGTLCLPAGTNGNYVAAAKFLKANVVNIPTESSDGFKLTEKTLTKALESVKKPWVCISGPTVSPTGLVYSNEEMDILLSTCAKFGAKVIIDTSFSGLEYSATSWDLKNALSKMDSSLSVSLLGCLSLNLLSGAIKLGFLVLDQSLIDAFHTLPGLSKPHSTVKYAAKKMLALKEEKASDFLDAVSETIKTLEGRSRRLKEVLQNSGWEVIQPSAGISMVAKPKAYLNKKVKLKAGDGQEIVELTDSNMRDVFLSHTGVCLNSGSWTGIPGYCRFSFALEDSEFDKAIESIAQFKSVLAN.

The residue at position 2 (Ala-2) is an N-acetylalanine.

It belongs to the class I-like SAM-binding methyltransferase superfamily. Homotetramer. Expressed in roots, rosette leaves and cauline leaves. Expressed at a lower level in developing seeds.

It is found in the cytoplasm. The enzyme catalyses L-methionine + S-adenosyl-L-methionine = S-methyl-L-methionine + S-adenosyl-L-homocysteine. Functionally, catalyzes the S-methylmethionine (SMM) biosynthesis from adenosyl-L-homocysteine (AdoMet) and methionine. SMM biosynthesis (by MMT1) and degradation (by HMT-1, HMT-2 and HMT-3) constitute the SMM cycle in plants, which is probably required to achieve short term control of AdoMet level. Also able to catalyze the selenium-methylmethionine (SeMM) from AdoMet and selenium-methionine (SeMet). May play a role in phoem sulfur transport; such function is however not essential. This is Methionine S-methyltransferase (MMT1) from Arabidopsis thaliana (Mouse-ear cress).